The sequence spans 612 residues: Dihydroxy-acid dehydratase (612 aa).

Aspartate 81 contributes to the Mg(2+) binding site. A [2Fe-2S] cluster-binding site is contributed by cysteine 122. Positions 123 and 124 each coordinate Mg(2+). An N6-carboxylysine modification is found at lysine 124. Cysteine 193 lines the [2Fe-2S] cluster pocket. Glutamate 489 serves as a coordination point for Mg(2+). Catalysis depends on serine 515, which acts as the Proton acceptor.

It belongs to the IlvD/Edd family. As to quaternary structure, homodimer. [2Fe-2S] cluster is required as a cofactor. Requires Mg(2+) as cofactor.

It catalyses the reaction (2R)-2,3-dihydroxy-3-methylbutanoate = 3-methyl-2-oxobutanoate + H2O. The catalysed reaction is (2R,3R)-2,3-dihydroxy-3-methylpentanoate = (S)-3-methyl-2-oxopentanoate + H2O. Its pathway is amino-acid biosynthesis; L-isoleucine biosynthesis; L-isoleucine from 2-oxobutanoate: step 3/4. The protein operates within amino-acid biosynthesis; L-valine biosynthesis; L-valine from pyruvate: step 3/4. Functions in the biosynthesis of branched-chain amino acids. Catalyzes the dehydration of (2R,3R)-2,3-dihydroxy-3-methylpentanoate (2,3-dihydroxy-3-methylvalerate) into 2-oxo-3-methylpentanoate (2-oxo-3-methylvalerate) and of (2R)-2,3-dihydroxy-3-methylbutanoate (2,3-dihydroxyisovalerate) into 2-oxo-3-methylbutanoate (2-oxoisovalerate), the penultimate precursor to L-isoleucine and L-valine, respectively. This is Dihydroxy-acid dehydratase from Teredinibacter turnerae (strain ATCC 39867 / T7901).